A 157-amino-acid polypeptide reads, in one-letter code: 2-C-methyl-D-erythritol 2,4-cyclodiphosphate synthase (157 aa).

Residues aspartate 9 and histidine 11 each coordinate a divalent metal cation. 4-CDP-2-C-methyl-D-erythritol 2-phosphate is bound by residues 9 to 11 (DVH) and 35 to 36 (HS). Histidine 43 contributes to the a divalent metal cation binding site. Residues 57–59 (DIG), 62–66 (FPDTD), 101–107 (AEKPKMA), 133–136 (TTTE), phenylalanine 140, and arginine 143 contribute to the 4-CDP-2-C-methyl-D-erythritol 2-phosphate site.

This sequence belongs to the IspF family. As to quaternary structure, homotrimer. A divalent metal cation serves as cofactor.

It carries out the reaction 4-CDP-2-C-methyl-D-erythritol 2-phosphate = 2-C-methyl-D-erythritol 2,4-cyclic diphosphate + CMP. The protein operates within isoprenoid biosynthesis; isopentenyl diphosphate biosynthesis via DXP pathway; isopentenyl diphosphate from 1-deoxy-D-xylulose 5-phosphate: step 4/6. In terms of biological role, involved in the biosynthesis of isopentenyl diphosphate (IPP) and dimethylallyl diphosphate (DMAPP), two major building blocks of isoprenoid compounds. Catalyzes the conversion of 4-diphosphocytidyl-2-C-methyl-D-erythritol 2-phosphate (CDP-ME2P) to 2-C-methyl-D-erythritol 2,4-cyclodiphosphate (ME-CPP) with a corresponding release of cytidine 5-monophosphate (CMP). This is 2-C-methyl-D-erythritol 2,4-cyclodiphosphate synthase from Listeria monocytogenes serovar 1/2a (strain ATCC BAA-679 / EGD-e).